We begin with the raw amino-acid sequence, 338 residues long: Ketol-acid reductoisomerase (NADP(+)) (338 aa).

Residues 1-181 (MQVYYDKDCD…GGGRTGIIET (181 aa)) enclose the KARI N-terminal Rossmann domain. NADP(+) contacts are provided by residues 24 to 27 (YGSQ), arginine 47, serine 50, serine 52, and 82 to 85 (DEFQ). Residue histidine 107 is part of the active site. Residue glycine 133 coordinates NADP(+). Residues 182–327 (TFKDETETDL…EKLRSMMPWI (146 aa)) form the KARI C-terminal knotted domain. Residues aspartate 190, glutamate 194, glutamate 226, and glutamate 230 each coordinate Mg(2+). Position 251 (serine 251) interacts with substrate.

This sequence belongs to the ketol-acid reductoisomerase family. Requires Mg(2+) as cofactor.

It catalyses the reaction (2R)-2,3-dihydroxy-3-methylbutanoate + NADP(+) = (2S)-2-acetolactate + NADPH + H(+). The enzyme catalyses (2R,3R)-2,3-dihydroxy-3-methylpentanoate + NADP(+) = (S)-2-ethyl-2-hydroxy-3-oxobutanoate + NADPH + H(+). The protein operates within amino-acid biosynthesis; L-isoleucine biosynthesis; L-isoleucine from 2-oxobutanoate: step 2/4. Its pathway is amino-acid biosynthesis; L-valine biosynthesis; L-valine from pyruvate: step 2/4. Functionally, involved in the biosynthesis of branched-chain amino acids (BCAA). Catalyzes an alkyl-migration followed by a ketol-acid reduction of (S)-2-acetolactate (S2AL) to yield (R)-2,3-dihydroxy-isovalerate. In the isomerase reaction, S2AL is rearranged via a Mg-dependent methyl migration to produce 3-hydroxy-3-methyl-2-ketobutyrate (HMKB). In the reductase reaction, this 2-ketoacid undergoes a metal-dependent reduction by NADPH to yield (R)-2,3-dihydroxy-isovalerate. This chain is Ketol-acid reductoisomerase (NADP(+)), found in Hahella chejuensis (strain KCTC 2396).